Here is a 208-residue protein sequence, read N- to C-terminus: Protein-methionine-sulfoxide reductase heme-binding subunit MsrQ (208 aa).

6 helical membrane passes run 16-36, 53-73, 82-102, 118-138, 156-176, and 178-198; these read IAVFVACLLPLVWYGARFVGG, WGLIFLLASLAATPARLLWGW, MVGLFAFFYVCLHLLSYIGLD, TYITVGMAALLLLVPLAVTST, LVYPAAVLGVLHYMLMVKADL, and EPLIFAGILGLLLAVRLVPAV.

The protein belongs to the MsrQ family. Heterodimer of a catalytic subunit (MsrP) and a heme-binding subunit (MsrQ). FMN is required as a cofactor. Requires heme b as cofactor.

Its subcellular location is the cell inner membrane. Part of the MsrPQ system that repairs oxidized periplasmic proteins containing methionine sulfoxide residues (Met-O), using respiratory chain electrons. Thus protects these proteins from oxidative-stress damage caused by reactive species of oxygen and chlorine generated by the host defense mechanisms. MsrPQ is essential for the maintenance of envelope integrity under bleach stress, rescuing a wide series of structurally unrelated periplasmic proteins from methionine oxidation. MsrQ provides electrons for reduction to the reductase catalytic subunit MsrP, using the quinone pool of the respiratory chain. The polypeptide is Protein-methionine-sulfoxide reductase heme-binding subunit MsrQ (Rhodospirillum rubrum (strain ATCC 11170 / ATH 1.1.1 / DSM 467 / LMG 4362 / NCIMB 8255 / S1)).